The chain runs to 725 residues: LPS-assembly protein LptD (725 aa).

Residues 1-25 (MSLLSKLHLILYICLLLLPLRFVNA) form the signal peptide.

The protein belongs to the LptD family. Component of the lipopolysaccharide transport and assembly complex. Interacts with LptE and LptA.

It localises to the cell outer membrane. In terms of biological role, together with LptE, is involved in the assembly of lipopolysaccharide (LPS) at the surface of the outer membrane. This Nitrosomonas eutropha (strain DSM 101675 / C91 / Nm57) protein is LPS-assembly protein LptD.